The chain runs to 4579 residues: Sacsin (4579 aa).

Positions V9 to K84 constitute a Ubiquitin-like domain. K943 is subject to N6-acetyllysine. Phosphoserine is present on residues S1779 and S2511. Residue T2516 is modified to Phosphothreonine. S3435 bears the Phosphoserine mark. Disordered regions lie at residues P4248–L4273 and L4279–L4298. The segment covering S4254–E4267 has biased composition (polar residues). Position 4261 is a phosphothreonine (T4261). At S4264 the chain carries Phosphoserine. Positions T4288–L4298 are enriched in basic residues. Residues I4306–S4393 enclose the J domain. Residues A4405–T4427 form a disordered region. Residues T4406 to C4420 are compositionally biased toward basic and acidic residues. An HEPN domain is found at L4451–I4567.

Highly expressed in the central nervous system. Also found in skeletal muscle and at low levels in pancreas.

The protein localises to the cytoplasm. Co-chaperone which acts as a regulator of the Hsp70 chaperone machinery and may be involved in the processing of other ataxia-linked proteins. This Homo sapiens (Human) protein is Sacsin (SACS).